Here is an 87-residue protein sequence, read N- to C-terminus: Putative BTB/POZ domain-containing protein At3g29740 (87 aa).

One can recognise a BTB domain in the interval 24–87 (VDVRLKAGDS…KHTELVALVE (64 aa)).

It functions in the pathway protein modification; protein ubiquitination. In terms of biological role, may act as a substrate-specific adapter of an E3 ubiquitin-protein ligase complex (CUL3-RBX1-BTB) which mediates the ubiquitination and subsequent proteasomal degradation of target proteins. The polypeptide is Putative BTB/POZ domain-containing protein At3g29740 (Arabidopsis thaliana (Mouse-ear cress)).